The following is a 355-amino-acid chain: Protein RecA (355 aa).

Residue Gly65 to Thr72 coordinates ATP.

It belongs to the RecA family.

The protein resides in the cytoplasm. In terms of biological role, can catalyze the hydrolysis of ATP in the presence of single-stranded DNA, the ATP-dependent uptake of single-stranded DNA by duplex DNA, and the ATP-dependent hybridization of homologous single-stranded DNAs. It interacts with LexA causing its activation and leading to its autocatalytic cleavage. The protein is Protein RecA of Pseudomonas putida (strain ATCC 47054 / DSM 6125 / CFBP 8728 / NCIMB 11950 / KT2440).